A 549-amino-acid chain; its full sequence is Oxygen-dependent choline dehydrogenase (549 aa).

4–33 (DFVIIGSGSAGSALAYRLSEGGKNSVIVIE) contacts FAD. The active-site Proton acceptor is His465.

It belongs to the GMC oxidoreductase family. It depends on FAD as a cofactor.

It carries out the reaction choline + A = betaine aldehyde + AH2. It catalyses the reaction betaine aldehyde + NAD(+) + H2O = glycine betaine + NADH + 2 H(+). It participates in amine and polyamine biosynthesis; betaine biosynthesis via choline pathway; betaine aldehyde from choline (cytochrome c reductase route): step 1/1. Functionally, involved in the biosynthesis of the osmoprotectant glycine betaine. Catalyzes the oxidation of choline to betaine aldehyde and betaine aldehyde to glycine betaine at the same rate. This is Oxygen-dependent choline dehydrogenase from Rhizobium johnstonii (strain DSM 114642 / LMG 32736 / 3841) (Rhizobium leguminosarum bv. viciae).